Here is a 548-residue protein sequence, read N- to C-terminus: Medium/long-chain-fatty-acid--CoA/3-oxocholest-4-en-26-oate--CoA ligase (548 aa).

ATP-binding positions include 174–182 (TGGTTGFPK), D415, R430, and K521. The span at 520–541 (GKPDYRWAKEQTEARPADDVHA) shows a compositional bias: basic and acidic residues. The segment at 520–548 (GKPDYRWAKEQTEARPADDVHAGHVTSGG) is disordered.

The protein belongs to the ATP-dependent AMP-binding enzyme family.

It carries out the reaction a medium-chain fatty acid + ATP + CoA = a medium-chain fatty acyl-CoA + AMP + diphosphate. The catalysed reaction is a long-chain fatty acid + ATP + CoA = a long-chain fatty acyl-CoA + AMP + diphosphate. The enzyme catalyses (25S)-3-oxocholest-4-en-26-oate + ATP + CoA = (25S)-3-oxocholest-4-en-26-oyl-CoA + AMP + diphosphate. It participates in lipid metabolism; fatty acid biosynthesis. It functions in the pathway steroid metabolism; cholesterol metabolism. Functionally, catalyzes the activation of medium/long-chain fatty acids as acyl-coenzyme A (acyl-CoA), which are then transferred to the multifunctional polyketide synthase (PKS) type III for further chain extension. Also involved in the degradation of cholesterol via the degradation of the side chains of C-24 branched-chain sterols. Catalyzes the ATP-dependent CoA thioesterification of the sterol 3-oxocholest-4-en-26-oate to yield 3-oxocholest-4-en-26-oyl-CoA. This Mycobacterium bovis (strain ATCC BAA-935 / AF2122/97) protein is Medium/long-chain-fatty-acid--CoA/3-oxocholest-4-en-26-oate--CoA ligase.